Reading from the N-terminus, the 178-residue chain is MDKKTVKVIEKYSMPFVQLVLEKGEEDRIFSDLTQIKQVVEKTGLPSFLKQVAVDESDKEKTIAFFQDSVSPLLQNFIQVLAYNHRANLFYDVLVDCLNRLEKETNRFEVTITSAHPLTDEQKTRLLPLIEKKMSLKVRSVKEQIDESLIGGFVIFANHKTIDVSIKQQLKVVKENLK.

Belongs to the ATPase delta chain family. In terms of assembly, F-type ATPases have 2 components, F(1) - the catalytic core - and F(0) - the membrane proton channel. F(1) has five subunits: alpha(3), beta(3), gamma(1), delta(1), epsilon(1). F(0) has three main subunits: a(1), b(2) and c(10-14). The alpha and beta chains form an alternating ring which encloses part of the gamma chain. F(1) is attached to F(0) by a central stalk formed by the gamma and epsilon chains, while a peripheral stalk is formed by the delta and b chains.

It is found in the cell membrane. F(1)F(0) ATP synthase produces ATP from ADP in the presence of a proton or sodium gradient. F-type ATPases consist of two structural domains, F(1) containing the extramembraneous catalytic core and F(0) containing the membrane proton channel, linked together by a central stalk and a peripheral stalk. During catalysis, ATP synthesis in the catalytic domain of F(1) is coupled via a rotary mechanism of the central stalk subunits to proton translocation. Functionally, this protein is part of the stalk that links CF(0) to CF(1). It either transmits conformational changes from CF(0) to CF(1) or is implicated in proton conduction. This Streptococcus pneumoniae (strain CGSP14) protein is ATP synthase subunit delta.